A 420-amino-acid polypeptide reads, in one-letter code: Light-independent protochlorophyllide reductase subunit N (420 aa).

Positions 21, 46, and 103 each coordinate [4Fe-4S] cluster.

The protein belongs to the BchN/ChlN family. As to quaternary structure, protochlorophyllide reductase is composed of three subunits; BchL, BchN and BchB. Forms a heterotetramer of two BchB and two BchN subunits. Requires [4Fe-4S] cluster as cofactor.

It carries out the reaction chlorophyllide a + oxidized 2[4Fe-4S]-[ferredoxin] + 2 ADP + 2 phosphate = protochlorophyllide a + reduced 2[4Fe-4S]-[ferredoxin] + 2 ATP + 2 H2O. It participates in porphyrin-containing compound metabolism; bacteriochlorophyll biosynthesis (light-independent). Component of the dark-operative protochlorophyllide reductase (DPOR) that uses Mg-ATP and reduced ferredoxin to reduce ring D of protochlorophyllide (Pchlide) to form chlorophyllide a (Chlide). This reaction is light-independent. The NB-protein (BchN-BchB) is the catalytic component of the complex. This is Light-independent protochlorophyllide reductase subunit N from Chlorobium luteolum (strain DSM 273 / BCRC 81028 / 2530) (Pelodictyon luteolum).